A 491-amino-acid chain; its full sequence is Probable CtpA-like serine protease (491 aa).

A disordered region spans residues 1–22; the sequence is MNDHQKNHATSQDDNTKSTPSK. The span at 8–22 shows a compositional bias: polar residues; that stretch reads HATSQDDNTKSTPSK. Residues 31 to 51 traverse the membrane as a helical segment; it reads LWHFILVILGIILLTSIITVV. Residues 119-201 form the PDZ domain; sequence TKQFNEGVSG…TYVTLTIKRG (83 aa). Residues Ser324, Asp335, and Lys349 each act as charge relay system in the active site.

Belongs to the peptidase S41A family.

Its subcellular location is the cell membrane. This chain is Probable CtpA-like serine protease, found in Staphylococcus epidermidis (strain ATCC 35984 / DSM 28319 / BCRC 17069 / CCUG 31568 / BM 3577 / RP62A).